The primary structure comprises 647 residues: DNA mismatch repair protein MutL (647 aa).

Residues 346 to 378 (QTVHAPRSAAPRVSERASDEPPAWQPSPTSGEP) form a disordered region.

The protein belongs to the DNA mismatch repair MutL/HexB family.

Functionally, this protein is involved in the repair of mismatches in DNA. It is required for dam-dependent methyl-directed DNA mismatch repair. May act as a 'molecular matchmaker', a protein that promotes the formation of a stable complex between two or more DNA-binding proteins in an ATP-dependent manner without itself being part of a final effector complex. The chain is DNA mismatch repair protein MutL from Limosilactobacillus fermentum (strain NBRC 3956 / LMG 18251) (Lactobacillus fermentum).